The following is a 292-amino-acid chain: Glutamyl-Q tRNA(Asp) synthetase (292 aa).

L-glutamate is bound by residues 9–13 (RFAPS) and glutamate 45. The 'HIGH' region signature appears at 12–22 (PSPSGPLHAGS). Residues cysteine 99, cysteine 101, tyrosine 121, and cysteine 125 each contribute to the Zn(2+) site. Residues tyrosine 184 and arginine 202 each contribute to the L-glutamate site. Positions 240–244 (KLSKQ) match the 'KMSKS' region motif. Residue lysine 243 coordinates ATP.

Belongs to the class-I aminoacyl-tRNA synthetase family. GluQ subfamily. Requires Zn(2+) as cofactor.

In terms of biological role, catalyzes the tRNA-independent activation of glutamate in presence of ATP and the subsequent transfer of glutamate onto a tRNA(Asp). Glutamate is transferred on the 2-amino-5-(4,5-dihydroxy-2-cyclopenten-1-yl) moiety of the queuosine in the wobble position of the QUC anticodon. The sequence is that of Glutamyl-Q tRNA(Asp) synthetase from Verminephrobacter eiseniae (strain EF01-2).